The sequence spans 214 residues: Large ribosomal subunit protein uL16-like (214 aa).

It belongs to the universal ribosomal protein uL16 family. As to quaternary structure, component of the 60S large ribosomal subunit (LSU).

It localises to the cytoplasm. In terms of biological role, testis-specific component of the ribosome, which is required for the transition from prophase to metaphase in male meiosis I. Compensates for the inactivated X-linked RPL10 paralog during spermatogenesis. The ribosome is a large ribonucleoprotein complex responsible for the synthesis of proteins in the cell. The small ribosomal subunit (SSU) binds messenger RNAs (mRNAs) and translates the encoded message by selecting cognate aminoacyl-transfer RNA (tRNA) molecules. The large subunit (LSU) contains the ribosomal catalytic site termed the peptidyl transferase center (PTC), which catalyzes the formation of peptide bonds, thereby polymerizing the amino acids delivered by tRNAs into a polypeptide chain. The nascent polypeptides leave the ribosome through a tunnel in the LSU and interact with protein factors that function in enzymatic processing, targeting, and the membrane insertion of nascent chains at the exit of the ribosomal tunnel. The polypeptide is Large ribosomal subunit protein uL16-like (RPL10L) (Bos taurus (Bovine)).